Reading from the N-terminus, the 844-residue chain is DNA mismatch repair protein MutS (844 aa).

610-617 contacts ATP; sequence GPNMGGKS.

This sequence belongs to the DNA mismatch repair MutS family.

This protein is involved in the repair of mismatches in DNA. It is possible that it carries out the mismatch recognition step. This protein has a weak ATPase activity. The protein is DNA mismatch repair protein MutS of Francisella tularensis subsp. mediasiatica (strain FSC147).